Reading from the N-terminus, the 372-residue chain is MSDINDPNSISLPVGSSCTSRGASTETFTTSRSTTLFSSQQESKDEGNVELRESITLPTINHRVLLSLKESAKVIGTKGSTIQNVREINHVKIGLSEKQLGCSDRVLSCAGRIINVAHSLGQIVSVLKEGSTVSSAEKYAFHFLNPILPPPTRDEFQDLTLDEINKIGTSRLMVTNSQLSSIIGKGGARIKSLKERHRVKIVASRDFLPDSDERILEIQGLPNAITNVLLQISKILLNELDITFASERRYYPHLRSSSPSNAVSLAASTSGVQTGASNYLNNEFKATLKIPESYVGAIAGRRGNRIANLRKFTKTKIIVEKKIDKTVIDVDPDNRTFIILGDHFKNVKLAESMLLKNLDVEIEKRKSRLAKK.

A compositionally biased stretch (polar residues) spans 1 to 23 (MSDINDPNSISLPVGSSCTSRGA). Residues 1 to 49 (MSDINDPNSISLPVGSSCTSRGASTETFTTSRSTTLFSSQQESKDEGNV) form a disordered region. The segment covering 24-39 (STETFTTSRSTTLFSS) has biased composition (low complexity). KH domains are found at residues 59–123 (TINH…LGQI), 167–232 (IGTS…LLQI), and 283–354 (EFKA…ESML).

The protein belongs to the HEK2 family. As to quaternary structure, binds RNA.

Its subcellular location is the cytoplasm. The protein resides in the P-body. It localises to the nucleus. It is found in the chromosome. The protein localises to the telomere. RNA-binding protein involved in the correct localization of transcripts in the cell. RNA localization is a widespread mechanism for achieving localized protein synthesis. Involved in structural and functional organization of telomeric chromatin and regulates silencing at the HMR locus. This is Heterogeneous nuclear rnp K-like protein 2 (HEK2) from Zygosaccharomyces rouxii (strain ATCC 2623 / CBS 732 / NBRC 1130 / NCYC 568 / NRRL Y-229).